Here is an 863-residue protein sequence, read N- to C-terminus: DNA ligase (863 aa).

Residues 76-80 (DAAYD), 125-126 (SL), and glutamate 159 contribute to the NAD(+) site. Lysine 161 (N6-AMP-lysine intermediate) is an active-site residue. 2 residues coordinate NAD(+): arginine 182 and glutamate 221. The disordered stretch occupies residues 237–256 (EDAGRPPFANPRNAAAGSLR). Residues 241–253 (RPPFANPRNAAAG) show a composition bias toward low complexity. Positions 346 and 370 each coordinate NAD(+). Positions 467, 470, 486, and 492 each coordinate Zn(2+). The region spanning 781–863 (GLPQTLEGKS…DTLLATGDVQ (83 aa)) is the BRCT domain.

The protein belongs to the NAD-dependent DNA ligase family. LigA subfamily. It depends on Mg(2+) as a cofactor. Mn(2+) serves as cofactor.

The catalysed reaction is NAD(+) + (deoxyribonucleotide)n-3'-hydroxyl + 5'-phospho-(deoxyribonucleotide)m = (deoxyribonucleotide)n+m + AMP + beta-nicotinamide D-nucleotide.. DNA ligase that catalyzes the formation of phosphodiester linkages between 5'-phosphoryl and 3'-hydroxyl groups in double-stranded DNA using NAD as a coenzyme and as the energy source for the reaction. It is essential for DNA replication and repair of damaged DNA. The protein is DNA ligase of Bifidobacterium animalis subsp. lactis (strain AD011).